The primary structure comprises 309 residues: Ferrochelatase (309 aa).

Positions 187 and 265 each coordinate Fe cation.

Belongs to the ferrochelatase family.

The protein resides in the cytoplasm. It catalyses the reaction heme b + 2 H(+) = protoporphyrin IX + Fe(2+). The protein operates within porphyrin-containing compound metabolism; protoheme biosynthesis; protoheme from protoporphyrin-IX: step 1/1. Functionally, catalyzes the ferrous insertion into protoporphyrin IX. This chain is Ferrochelatase, found in Nitratiruptor sp. (strain SB155-2).